Reading from the N-terminus, the 449-residue chain is Hyaluronidase (449 aa).

The N-terminal stretch at 1-23 (MYHLWIKCLAAWIFLKRFNGVHV) is a signal peptide. 2 disulfides stabilise this stretch: Cys47–Cys340 and Cys211–Cys227. Asn67 and Asn103 each carry an N-linked (GlcNAc...) asparagine glycan. Glu135 serves as the catalytic Proton donor. The N-linked (GlcNAc...) asparagine glycan is linked to Asn153. N-linked (GlcNAc...) asparagine glycosylation occurs at Asn357. Cystine bridges form between Cys365-Cys376, Cys370-Cys427, and Cys429-Cys438. Residue Asn401 is glycosylated (N-linked (GlcNAc...) asparagine). The EGF-like domain occupies 427–438 (CQCYQGWQGLYC).

Belongs to the glycosyl hydrolase 56 family. As to quaternary structure, monomer. In terms of tissue distribution, expressed by the venom gland.

It is found in the secreted. It catalyses the reaction Random hydrolysis of (1-&gt;4)-linkages between N-acetyl-beta-D-glucosamine and D-glucuronate residues in hyaluronate.. Snake venom endo-hyaluronidase that degrades hyaluronan to smaller oligosaccharide fragments. In venom, it is not toxic by itself, but increases the diffusion of other venom proteins by degrading the extracellular matrix. In addition, it displays antiedematogenic activity. The sequence is that of Hyaluronidase from Echis ocellatus (Ocellated saw-scaled viper).